Consider the following 259-residue polypeptide: Small ribosomal subunit protein uS2 (259 aa).

Positions 234-259 (VAEDSEEVSTVDADAITAEDFETEEV) are disordered. Over residues 250–259 (TAEDFETEEV) the composition is skewed to acidic residues.

It belongs to the universal ribosomal protein uS2 family.

This chain is Small ribosomal subunit protein uS2, found in Sulfurimonas denitrificans (strain ATCC 33889 / DSM 1251) (Thiomicrospira denitrificans (strain ATCC 33889 / DSM 1251)).